The chain runs to 137 residues: Large ribosomal subunit protein uL16 (137 aa).

It belongs to the universal ribosomal protein uL16 family. As to quaternary structure, part of the 50S ribosomal subunit.

Its function is as follows. Binds 23S rRNA and is also seen to make contacts with the A and possibly P site tRNAs. The polypeptide is Large ribosomal subunit protein uL16 (Leuconostoc mesenteroides subsp. mesenteroides (strain ATCC 8293 / DSM 20343 / BCRC 11652 / CCM 1803 / JCM 6124 / NCDO 523 / NBRC 100496 / NCIMB 8023 / NCTC 12954 / NRRL B-1118 / 37Y)).